The primary structure comprises 164 residues: Putative F-box protein At1g59675 (164 aa).

The region spanning 9–56 is the F-box domain; the sequence is SQSDHVPLDLTIEILSRLPAKSVGRFRSVSKLWSANTTSQNFINSFAT.

The polypeptide is Putative F-box protein At1g59675 (Arabidopsis thaliana (Mouse-ear cress)).